A 225-amino-acid chain; its full sequence is UPF0758 protein XC_3944 (225 aa).

The 123-residue stretch at 102–224 (ALSDPSSVGR…PVSLAERGWV (123 aa)) folds into the MPN domain. Residues His-173, His-175, and Asp-186 each coordinate Zn(2+). The JAMM motif motif lies at 173-186 (HNHPSGNPEPSEAD).

The protein belongs to the UPF0758 family.

The sequence is that of UPF0758 protein XC_3944 from Xanthomonas campestris pv. campestris (strain 8004).